Reading from the N-terminus, the 514-residue chain is FAD-dependent monooxygenase AacuC (514 aa).

Positions 1 to 29 (MVSNEYLTHGDKDEFDPAKWSSTPGELPP) are disordered. Positions 8–17 (THGDKDEFDP) are enriched in basic and acidic residues. Positions 79 and 146 each coordinate FAD. R227 is a catalytic residue. D358 and G371 together coordinate FAD.

This sequence belongs to the paxM FAD-dependent monooxygenase family. The cofactor is FAD.

It functions in the pathway secondary metabolite biosynthesis. FAD-dependent monooxygenase; part of the gene cluster that mediates the biosynthesis of the tetrahydroxanthone dimer secalonic acid D. The pathway begins with the synthesis of atrochrysone thioester by the polyketide synthase AacuL. The atrochrysone carboxyl ACP thioesterase AacuM then breaks the thioester bond and releases the atrochrysone carboxylic acid from AacuL. Atrochrysone carboxylic acid is decarboxylated by the decarboxylase AacuI, and oxidized by the anthrone oxygenase AacuG to yield emodin. Emodin is then reduced to emodin hydroquinone by a yet unidentified oxidoreductase. A-ring reduction by the short chain dehydrogenase AacuN, dehydration by the scytalone dehydratase-like protein AacuK and probable spontaneous re-oxidation, results in overall deoxygenation to chrysophanol. Baeyer-Villiger oxidation by the Baeyer-Villiger monooxygenase (BVMO) AacuH then yields monodictyphenone. Monodictyphenone is transformed into compounds with the tetrahydroxanthone skeleton via methylesterification by the methyltransferase AacuQ, followed by the action of the flavin-dependent monooxygenase AacuC, the isomerase AacuP, and the short chain dehydrogenase/reductase AacuF or AacuD. AacuF and AacuD should accept the same compound as a substrate but perform the ketoreduction with a different stereoselectivity, thus yielding blennolides B and A, respectively. In the final step of the biosynthesis, the cytochrome P450 monooxygenase AacuE accepts blennolide B and/or blennolide A to conduct the dimerization reaction to furnish the tetrahydroxanthone dimers, secalonic acids D, B, and F. This is FAD-dependent monooxygenase AacuC from Aspergillus aculeatus (strain ATCC 16872 / CBS 172.66 / WB 5094).